The following is a 106-amino-acid chain: ATP-dependent Clp protease adapter protein ClpS (106 aa).

Belongs to the ClpS family. As to quaternary structure, binds to the N-terminal domain of the chaperone ClpA.

In terms of biological role, involved in the modulation of the specificity of the ClpAP-mediated ATP-dependent protein degradation. In Citrobacter koseri (strain ATCC BAA-895 / CDC 4225-83 / SGSC4696), this protein is ATP-dependent Clp protease adapter protein ClpS.